Consider the following 117-residue polypeptide: Small ribosomal subunit protein uS17 (117 aa).

The protein belongs to the universal ribosomal protein uS17 family. Part of the 30S ribosomal subunit.

One of the primary rRNA binding proteins, it binds specifically to the 5'-end of 16S ribosomal RNA. This is Small ribosomal subunit protein uS17 from Methanocaldococcus jannaschii (strain ATCC 43067 / DSM 2661 / JAL-1 / JCM 10045 / NBRC 100440) (Methanococcus jannaschii).